A 674-amino-acid chain; its full sequence is Protein asunder (674 aa).

Residues 516-538 (HKAKDQYRLLYRELEQLIQLNAS) are a coiled coil. The disordered stretch occupies residues 560 to 579 (PSKSEAGTANLRSFTESPLS). Residues 564–577 (EAGTANLRSFTESP) show a composition bias toward polar residues. The short motif at 601–607 (LKASKRR) is the Nuclear localization signal (NLS) element.

The protein belongs to the Integrator subunit 13 family. Belongs to the multiprotein complex Integrator, at least composed of IntS1, IntS2, IntS3, IntS4, omd/IntS5, IntS6, defl/IntS7, IntS8, IntS9, IntS10, IntS11, IntS12, asun/IntS13, IntS14 and IntS15. The core complex associates with protein phosphatase 2A subunits mts/PP2A and Pp2A-29B, to form the Integrator-PP2A (INTAC) complex. In terms of processing, phosphorylated.

It localises to the nucleus. It is found in the cytoplasm. The protein localises to the perinuclear region. Functionally, component of the integrator complex, a multiprotein complex that terminates RNA polymerase II (Pol II) transcription in the promoter-proximal region of genes. The integrator complex provides a quality checkpoint during transcription elongation by driving premature transcription termination of transcripts that are unfavorably configured for transcriptional elongation: the complex terminates transcription by (1) catalyzing dephosphorylation of the C-terminal domain (CTD) of Pol II subunit Polr2A/Rbp1 and Spt5, and (2) degrading the exiting nascent RNA transcript via endonuclease activity. The integrator complex is also involved in the 3'-end processing of the U7 snRNA, and also the spliceosomal snRNAs U1, U2, U4 and U5. The chain is Protein asunder (asun) from Drosophila pseudoobscura pseudoobscura (Fruit fly).